The following is a 439-amino-acid chain: Niacin transporter NiaP (439 aa).

Helical transmembrane passes span 20–40 (LWVV…IAFI), 57–77 (WIVS…GGLA), 84–104 (TVFA…AFAP), 108–128 (WLLA…PVAV), 143–163 (FIVL…LVSY), 169–189 (FGWH…YVII), 253–273 (LMLW…FTWL), 288–308 (FEYV…AAWL), 316–336 (ATLA…GQAD), 338–358 (VFNI…AWGV), 374–394 (FGAG…PIVV), and 407–427 (VFMM…ILGE).

Belongs to the major facilitator superfamily. Sugar transporter (TC 2.A.1.1) family.

The protein localises to the cell inner membrane. Functionally, functions as a high-affinity transporter of niacin (nicotinamide or nicotinate). Probably substantially contributes to niacin transport when its concentration in the medium is very low. The protein is Niacin transporter NiaP of Acinetobacter baylyi (strain ATCC 33305 / BD413 / ADP1).